The chain runs to 67 residues: ATP synthase F(0) complex subunit 8 (67 aa).

The helical transmembrane segment at 8–24 threads the bilayer; it reads TWFTTVLASSITLFILM. An N6-acetyllysine; alternate modification is found at Lys-54. Lys-54 bears the N6-succinyllysine; alternate mark. Position 57 is an N6-acetyllysine (Lys-57).

Belongs to the ATPase protein 8 family. As to quaternary structure, component of the ATP synthase complex composed at least of ATP5F1A/subunit alpha, ATP5F1B/subunit beta, ATP5MC1/subunit c (homooctomer), MT-ATP6/subunit a, MT-ATP8/subunit 8, ATP5ME/subunit e, ATP5MF/subunit f, ATP5MG/subunit g, ATP5MK/subunit k, ATP5MJ/subunit j, ATP5F1C/subunit gamma, ATP5F1D/subunit delta, ATP5F1E/subunit epsilon, ATP5PF/subunit F6, ATP5PB/subunit b, ATP5PD/subunit d, ATP5PO/subunit OSCP. ATP synthase complex consists of a soluble F(1) head domain (subunits alpha(3) and beta(3)) - the catalytic core - and a membrane F(0) domain - the membrane proton channel (subunits c, a, 8, e, f, g, k and j). These two domains are linked by a central stalk (subunits gamma, delta, and epsilon) rotating inside the F1 region and a stationary peripheral stalk (subunits F6, b, d, and OSCP). Interacts with PRICKLE3.

The protein resides in the mitochondrion membrane. In terms of biological role, subunit 8, of the mitochondrial membrane ATP synthase complex (F(1)F(0) ATP synthase or Complex V) that produces ATP from ADP in the presence of a proton gradient across the membrane which is generated by electron transport complexes of the respiratory chain. ATP synthase complex consist of a soluble F(1) head domain - the catalytic core - and a membrane F(1) domain - the membrane proton channel. These two domains are linked by a central stalk rotating inside the F(1) region and a stationary peripheral stalk. During catalysis, ATP synthesis in the catalytic domain of F(1) is coupled via a rotary mechanism of the central stalk subunits to proton translocation. In vivo, can only synthesize ATP although its ATP hydrolase activity can be activated artificially in vitro. Part of the complex F(0) domain. In Cricetulus griseus (Chinese hamster), this protein is ATP synthase F(0) complex subunit 8.